The following is a 444-amino-acid chain: Probable D-serine dehydratase (444 aa).

K110 is subject to N6-(pyridoxal phosphate)lysine.

It belongs to the serine/threonine dehydratase family. DsdA subfamily. It depends on pyridoxal 5'-phosphate as a cofactor.

It catalyses the reaction D-serine = pyruvate + NH4(+). The chain is Probable D-serine dehydratase from Burkholderia thailandensis (strain ATCC 700388 / DSM 13276 / CCUG 48851 / CIP 106301 / E264).